We begin with the raw amino-acid sequence, 177 residues long: ATP synthase subunit delta (177 aa).

The protein belongs to the ATPase delta chain family. As to quaternary structure, F-type ATPases have 2 components, F(1) - the catalytic core - and F(0) - the membrane proton channel. F(1) has five subunits: alpha(3), beta(3), gamma(1), delta(1), epsilon(1). F(0) has three main subunits: a(1), b(2) and c(10-14). The alpha and beta chains form an alternating ring which encloses part of the gamma chain. F(1) is attached to F(0) by a central stalk formed by the gamma and epsilon chains, while a peripheral stalk is formed by the delta and b chains.

It localises to the cell membrane. Functionally, f(1)F(0) ATP synthase produces ATP from ADP in the presence of a proton or sodium gradient. F-type ATPases consist of two structural domains, F(1) containing the extramembraneous catalytic core and F(0) containing the membrane proton channel, linked together by a central stalk and a peripheral stalk. During catalysis, ATP synthesis in the catalytic domain of F(1) is coupled via a rotary mechanism of the central stalk subunits to proton translocation. This protein is part of the stalk that links CF(0) to CF(1). It either transmits conformational changes from CF(0) to CF(1) or is implicated in proton conduction. This is ATP synthase subunit delta from Buchnera aphidicola subsp. Acyrthosiphon pisum (strain APS) (Acyrthosiphon pisum symbiotic bacterium).